Reading from the N-terminus, the 340-residue chain is Ferredoxin--NADP reductase (340 aa).

FAD contacts are provided by Asp-33, Gln-41, Tyr-46, Ala-86, Phe-120, Asp-286, and Thr-327.

This sequence belongs to the ferredoxin--NADP reductase type 2 family. In terms of assembly, homodimer. FAD is required as a cofactor.

It carries out the reaction 2 reduced [2Fe-2S]-[ferredoxin] + NADP(+) + H(+) = 2 oxidized [2Fe-2S]-[ferredoxin] + NADPH. This chain is Ferredoxin--NADP reductase, found in Rickettsia conorii (strain ATCC VR-613 / Malish 7).